Reading from the N-terminus, the 555-residue chain is L-ascorbate oxidase homolog (555 aa).

Positions methionine 1–alanine 23 are cleaved as a signal peptide. 2 Plastocyanin-like domains span residues aspartate 25–asparagine 145 and glutamate 158–glycine 301. N-linked (GlcNAc...) asparagine glycans are attached at residues asparagine 33, asparagine 61, and asparagine 110. An intrachain disulfide couples cysteine 103 to cysteine 539. 3 N-linked (GlcNAc...) asparagine glycosylation sites follow: asparagine 330, asparagine 350, and asparagine 422. The Plastocyanin-like 3 domain maps to histidine 345–lysine 524.

The protein belongs to the multicopper oxidase family. As to expression, maximal expression in early binucleate microspores; declines considerably in mature trinucleate pollen.

The protein resides in the secreted. In terms of biological role, probable oxidase that may be involved in pollen tube growth. The protein is L-ascorbate oxidase homolog (Bp10) of Brassica napus (Rape).